A 388-amino-acid chain; its full sequence is Succinate--CoA ligase [ADP-forming] subunit beta (388 aa).

Residues 9–244 form the ATP-grasp domain; sequence KEILRKFGVA…LDEEDPAEIE (236 aa). Residues Lys46, 53–55, Glu99, Ala102, and Glu107 each bind ATP; that span reads GRG. Residues Asn199 and Asp213 each coordinate Mg(2+). Residues Asn264 and 321-323 contribute to the substrate site; that span reads GIM.

It belongs to the succinate/malate CoA ligase beta subunit family. As to quaternary structure, heterotetramer of two alpha and two beta subunits. It depends on Mg(2+) as a cofactor.

The catalysed reaction is succinate + ATP + CoA = succinyl-CoA + ADP + phosphate. The enzyme catalyses GTP + succinate + CoA = succinyl-CoA + GDP + phosphate. The protein operates within carbohydrate metabolism; tricarboxylic acid cycle; succinate from succinyl-CoA (ligase route): step 1/1. In terms of biological role, succinyl-CoA synthetase functions in the citric acid cycle (TCA), coupling the hydrolysis of succinyl-CoA to the synthesis of either ATP or GTP and thus represents the only step of substrate-level phosphorylation in the TCA. The beta subunit provides nucleotide specificity of the enzyme and binds the substrate succinate, while the binding sites for coenzyme A and phosphate are found in the alpha subunit. The protein is Succinate--CoA ligase [ADP-forming] subunit beta of Burkholderia thailandensis (strain ATCC 700388 / DSM 13276 / CCUG 48851 / CIP 106301 / E264).